The sequence spans 1459 residues: ARF guanine-nucleotide exchange factor 2 (1459 aa).

Residues S46 and S284 each carry the phosphoserine modification. Residues F570–N714 enclose the SEC7 domain. The segment at E1412 to D1459 is disordered. Over residues D1447–D1459 the composition is skewed to basic and acidic residues.

Interacts (via SEC7 domain) with DRS2 (via C-terminus); the interaction is direct. Interacts with GMH1.

Its subcellular location is the cytoplasm. It localises to the cytosol. The protein localises to the membrane. It is found in the golgi apparatus membrane. In terms of biological role, activates the ARF proteins by exchanging bound GDP for free GTP. Plays a role in maintaining mitochondrial morphology. Stimulates DRS2 flippase activity. This chain is ARF guanine-nucleotide exchange factor 2 (GEA2), found in Saccharomyces cerevisiae (strain ATCC 204508 / S288c) (Baker's yeast).